The primary structure comprises 176 residues: Pectinesterase inhibitor 1 (176 aa).

The signal sequence occupies residues M1–A25. Disulfide bonds link C35–C44 and C98–C138. N154 is a glycosylation site (N-linked (GlcNAc...) asparagine).

Belongs to the PMEI family. Monomer and homodimer. Interacts in vitro with PPME1. As to expression, highest expression in flowers. Expressed exclusively at the pollen tube tip.

The protein resides in the secreted. The protein localises to the extracellular space. It is found in the apoplast. Its function is as follows. Inhibits pectin methylesterase (PME) from flowers and siliques. Inhibits PME from leaves. This Arabidopsis thaliana (Mouse-ear cress) protein is Pectinesterase inhibitor 1.